The following is a 423-amino-acid chain: Serine--tRNA ligase (423 aa).

231-233 contacts L-serine; it reads TAE. 262–264 lines the ATP pocket; the sequence is RSE. Glutamate 285 contacts L-serine. 349-352 is an ATP binding site; it reads EISS. L-serine is bound at residue serine 384.

Belongs to the class-II aminoacyl-tRNA synthetase family. Type-1 seryl-tRNA synthetase subfamily. In terms of assembly, homodimer. The tRNA molecule binds across the dimer.

It localises to the cytoplasm. It catalyses the reaction tRNA(Ser) + L-serine + ATP = L-seryl-tRNA(Ser) + AMP + diphosphate + H(+). It carries out the reaction tRNA(Sec) + L-serine + ATP = L-seryl-tRNA(Sec) + AMP + diphosphate + H(+). It functions in the pathway aminoacyl-tRNA biosynthesis; selenocysteinyl-tRNA(Sec) biosynthesis; L-seryl-tRNA(Sec) from L-serine and tRNA(Sec): step 1/1. Its function is as follows. Catalyzes the attachment of serine to tRNA(Ser). Is also able to aminoacylate tRNA(Sec) with serine, to form the misacylated tRNA L-seryl-tRNA(Sec), which will be further converted into selenocysteinyl-tRNA(Sec). In Lactococcus lactis subsp. lactis (strain IL1403) (Streptococcus lactis), this protein is Serine--tRNA ligase.